A 325-amino-acid polypeptide reads, in one-letter code: Post-GPI attachment to proteins factor 2-like (325 aa).

6 helical membrane passes run 80 to 100, 130 to 150, 171 to 191, 205 to 225, 243 to 263, and 276 to 296; these read VVTA…AYVF, YFWR…AFVY, LLIT…GGVT, IFIT…KLNG, WKKI…VFFA, and WFAF…FTII.

It belongs to the PGAP2 family.

It localises to the membrane. The protein is Post-GPI attachment to proteins factor 2-like of Drosophila melanogaster (Fruit fly).